The primary structure comprises 869 residues: Mismatch repair endonuclease PMS2 (869 aa).

ATP is bound by residues N44, D69, E108, A109, and L110. Residues 585–588 (RRFK) carry the Nuclear localization signal motif.

The protein belongs to the DNA mismatch repair MutL/HexB family.

Its subcellular location is the nucleus. The catalysed reaction is ATP + H2O = ADP + phosphate + H(+). In terms of biological role, component of the post-replicative DNA mismatch repair system (MMR). Involved in B cell growth by positively regulating B cell proliferation and controlling replication efficiency. Controls cell cycle to prevent re-replication and defects in DNA damage-induced G2 checkpoint. Doesn't seem to counteract or control the immunoglobulin gene conversion (Ig GC) and to contribute to guanine/uracil mismatch repair. Possesses an ATPase activity, but in the absence of gross structural changes, ATP hydrolysis may not be necessary for proficient mismatch repair. The protein is Mismatch repair endonuclease PMS2 of Gallus gallus (Chicken).